A 341-amino-acid chain; its full sequence is Phenylalanine--tRNA ligase alpha subunit (341 aa).

Glu-256 contributes to the Mg(2+) binding site.

Belongs to the class-II aminoacyl-tRNA synthetase family. Phe-tRNA synthetase alpha subunit type 1 subfamily. In terms of assembly, tetramer of two alpha and two beta subunits. Mg(2+) is required as a cofactor.

The protein localises to the cytoplasm. It catalyses the reaction tRNA(Phe) + L-phenylalanine + ATP = L-phenylalanyl-tRNA(Phe) + AMP + diphosphate + H(+). This Leptospira biflexa serovar Patoc (strain Patoc 1 / Ames) protein is Phenylalanine--tRNA ligase alpha subunit.